We begin with the raw amino-acid sequence, 394 residues long: ATP phosphoribosyltransferase regulatory subunit (394 aa).

It belongs to the class-II aminoacyl-tRNA synthetase family. HisZ subfamily. As to quaternary structure, heteromultimer composed of HisG and HisZ subunits.

It localises to the cytoplasm. It functions in the pathway amino-acid biosynthesis; L-histidine biosynthesis; L-histidine from 5-phospho-alpha-D-ribose 1-diphosphate: step 1/9. In terms of biological role, required for the first step of histidine biosynthesis. May allow the feedback regulation of ATP phosphoribosyltransferase activity by histidine. In Pseudomonas paraeruginosa (strain DSM 24068 / PA7) (Pseudomonas aeruginosa (strain PA7)), this protein is ATP phosphoribosyltransferase regulatory subunit.